Here is a 312-residue protein sequence, read N- to C-terminus: Acetyl-coenzyme A carboxylase carboxyl transferase subunit alpha (312 aa).

The CoA carboxyltransferase C-terminal domain occupies 36-286; the sequence is RLDKEVKSIY…KEYFLDALRT (251 aa).

Belongs to the AccA family. Acetyl-CoA carboxylase is a heterohexamer composed of biotin carboxyl carrier protein (AccB), biotin carboxylase (AccC) and two subunits each of ACCase subunit alpha (AccA) and ACCase subunit beta (AccD).

Its subcellular location is the cytoplasm. It carries out the reaction N(6)-carboxybiotinyl-L-lysyl-[protein] + acetyl-CoA = N(6)-biotinyl-L-lysyl-[protein] + malonyl-CoA. The protein operates within lipid metabolism; malonyl-CoA biosynthesis; malonyl-CoA from acetyl-CoA: step 1/1. Component of the acetyl coenzyme A carboxylase (ACC) complex. First, biotin carboxylase catalyzes the carboxylation of biotin on its carrier protein (BCCP) and then the CO(2) group is transferred by the carboxyltransferase to acetyl-CoA to form malonyl-CoA. In Helicobacter pylori (strain HPAG1), this protein is Acetyl-coenzyme A carboxylase carboxyl transferase subunit alpha.